We begin with the raw amino-acid sequence, 234 residues long: Orotidine 5'-phosphate decarboxylase (234 aa).

Substrate-binding positions include Asp-17, Lys-38, 65–74 (DLKLHDIPNT), Thr-122, Arg-184, Gln-193, Gly-213, and Arg-214. Catalysis depends on Lys-67, which acts as the Proton donor.

Belongs to the OMP decarboxylase family. Type 1 subfamily. In terms of assembly, homodimer.

The enzyme catalyses orotidine 5'-phosphate + H(+) = UMP + CO2. The protein operates within pyrimidine metabolism; UMP biosynthesis via de novo pathway; UMP from orotate: step 2/2. Functionally, catalyzes the decarboxylation of orotidine 5'-monophosphate (OMP) to uridine 5'-monophosphate (UMP). The sequence is that of Orotidine 5'-phosphate decarboxylase from Thermosynechococcus vestitus (strain NIES-2133 / IAM M-273 / BP-1).